The sequence spans 1217 residues: ATP-dependent helicase/nuclease subunit A (1217 aa).

Residues 10–475 form the UvrD-like helicase ATP-binding domain; it reads VIWTDAQWQS…IDLSQNFRSR (466 aa). 31-38 lines the ATP pocket; it reads AAAGSGKT. One can recognise a UvrD-like helicase C-terminal domain in the interval 476 to 786; that stretch reads KEVLSTTNYI…RMMTIHSSKG (311 aa).

It belongs to the helicase family. AddA subfamily. In terms of assembly, heterodimer of AddA and AddB/RexB. Mg(2+) is required as a cofactor.

The catalysed reaction is Couples ATP hydrolysis with the unwinding of duplex DNA by translocating in the 3'-5' direction.. It carries out the reaction ATP + H2O = ADP + phosphate + H(+). The heterodimer acts as both an ATP-dependent DNA helicase and an ATP-dependent, dual-direction single-stranded exonuclease. Recognizes the chi site generating a DNA molecule suitable for the initiation of homologous recombination. The AddA nuclease domain is required for chi fragment generation; this subunit has the helicase and 3' -&gt; 5' nuclease activities. This Staphylococcus aureus (strain USA300) protein is ATP-dependent helicase/nuclease subunit A.